We begin with the raw amino-acid sequence, 138 residues long: uncharacterized protein (138 aa).

A DNA-binding region (H-T-H motif) is located at residues 17–38 (LCRNDVAHEAGTNNVQIMRIEK).

This is an uncharacterized protein from Herpetosiphon aurantiacus (Herpetosiphon giganteus).